A 267-amino-acid chain; its full sequence is Tetrahydromethanopterin S-methyltransferase subunit C (267 aa).

7 consecutive transmembrane segments (helical) span residues 19–39 (IMALGIVGGLVGIYLGNFAPP), 75–95 (IGMLALGMGILAALFGLSVGG), 97–117 (AGPIVAIVVAAIIGGVIGALA), 140–160 (TLVILGLSVVIAGSFDFASVV), 162–182 (YVVANGYIALIFIIGGMGILH), 198–218 (LMLAVEKGAIALIIAGFASSL), and 221–241 (GLMAAGLNMLIGIIIWYVAFS).

The protein belongs to the MtrC family. In terms of assembly, the complex is composed of 8 subunits; MtrA, MtrB, MtrC, MtrD, MtrE, MtrF, MtrG and MtrH.

It is found in the cell membrane. The catalysed reaction is 5-methyl-5,6,7,8-tetrahydromethanopterin + coenzyme M + 2 Na(+)(in) = 5,6,7,8-tetrahydromethanopterin + methyl-coenzyme M + 2 Na(+)(out). The protein operates within one-carbon metabolism; methanogenesis from CO(2); methyl-coenzyme M from 5,10-methylene-5,6,7,8-tetrahydromethanopterin: step 2/2. Functionally, part of a complex that catalyzes the formation of methyl-coenzyme M and tetrahydromethanopterin from coenzyme M and methyl-tetrahydromethanopterin. This is an energy-conserving, sodium-ion translocating step. The polypeptide is Tetrahydromethanopterin S-methyltransferase subunit C (Methanosarcina barkeri (strain Fusaro / DSM 804)).